We begin with the raw amino-acid sequence, 299 residues long: Probable adenylate kinase 7, mitochondrial (299 aa).

Residues 1 to 25 (MAGVLRLAGAARSPLARALAPAARR) constitute a mitochondrion transit peptide. An ATP-binding site is contributed by 80–85 (GPQKHA). The segment at 100 to 129 (SMGTLVRQELSPASSLYKKIANSVNEGKLV) is NMP. Residues Arg-106, 127 to 129 (KLV), 157 to 160 (GIPR), and Gln-164 contribute to the AMP site. ATP-binding positions include Arg-190 and 203–204 (LF). Residues 193–237 (GGDICPHCGQLFDFSKTASSDRNPSLGSCTWPSQVQHAAVLGLED) form an LID region.

Belongs to the adenylate kinase family.

Its subcellular location is the mitochondrion. The enzyme catalyses AMP + ATP = 2 ADP. Functionally, catalyzes the reversible transfer of the terminal phosphate group between ATP and AMP. Plays an important role in cellular energy homeostasis and in adenine nucleotide metabolism. This is Probable adenylate kinase 7, mitochondrial from Oryza sativa subsp. japonica (Rice).